Consider the following 379-residue polypeptide: LIM/homeobox protein Lhx9 (379 aa).

2 consecutive LIM zinc-binding domains span residues 51–112 (TLCA…RFSV) and 113–175 (QRCA…LVQG). 2 disordered regions span residues 232-257 (ENDTDLDRDQSYPPSQKTKRMRTSFK) and 310-379 (RQEN…TNLF). Over residues 248-257 (KTKRMRTSFK) the composition is skewed to basic residues. Positions 249 to 308 (TKRMRTSFKHHQLRTTKSYFAINHNPDAKDLKQLAQKTGLTKRVLQVWFQNARAKFRRNL) form a DNA-binding region, homeobox. A compositionally biased stretch (polar residues) spans 326–379 (APASTDSAALTPTGAASTLSDLTSPSLNVGASVTPNMDSHESGSPSQTTLTNLF).

In terms of tissue distribution, isoform 1 and isoform 3 are expressed in ovary, testis, brain and heart. Isoform 4 and isoform 5 are expressed in brain.

It is found in the nucleus. May be involved in gonadal development. The chain is LIM/homeobox protein Lhx9 (lhx9) from Glandirana rugosa (Japanese wrinkled frog).